We begin with the raw amino-acid sequence, 119 residues long: Beta-2-microglobulin (119 aa).

The first 20 residues, 1–20 (MARFVAVALLVLLSLSGLEA), serve as a signal peptide directing secretion. An Ig-like C1-type domain is found at 25 to 114 (PKIQVYSRHP…VTFSTPKTVK (90 aa)). A disulfide bridge connects residues Cys45 and Cys100.

It belongs to the beta-2-microglobulin family. As to quaternary structure, heterodimer of an alpha chain and a beta chain. Beta-2-microglobulin is the beta-chain of major histocompatibility complex class I molecules.

The protein resides in the secreted. Its function is as follows. Component of the class I major histocompatibility complex (MHC). Involved in the presentation of peptide antigens to the immune system. In Plecturocebus moloch (Dusky titi monkey), this protein is Beta-2-microglobulin (B2M).